We begin with the raw amino-acid sequence, 379 residues long: Putative clathrin assembly protein At1g68110 (379 aa).

Positions 26–158 (NSSYRNADLE…SFLSDQIHRL (133 aa)) constitute an ENTH domain.

It localises to the membrane. The protein resides in the clathrin-coated pit. The protein localises to the golgi apparatus. Its subcellular location is the cytoplasmic vesicle. It is found in the clathrin-coated vesicle. This chain is Putative clathrin assembly protein At1g68110, found in Arabidopsis thaliana (Mouse-ear cress).